A 358-amino-acid polypeptide reads, in one-letter code: Alanine racemase (358 aa).

Lys-35 serves as the catalytic Proton acceptor; specific for D-alanine. Residue Lys-35 is modified to N6-(pyridoxal phosphate)lysine. Position 131 (Arg-131) interacts with substrate. The active-site Proton acceptor; specific for L-alanine is Tyr-253. Substrate is bound at residue Met-301.

This sequence belongs to the alanine racemase family. The cofactor is pyridoxal 5'-phosphate.

The enzyme catalyses L-alanine = D-alanine. It functions in the pathway amino-acid biosynthesis; D-alanine biosynthesis; D-alanine from L-alanine: step 1/1. Catalyzes the interconversion of L-alanine and D-alanine. May also act on other amino acids. The polypeptide is Alanine racemase (alr) (Alteromonas mediterranea (strain DSM 17117 / CIP 110805 / LMG 28347 / Deep ecotype)).